A 359-amino-acid chain; its full sequence is 3-dehydroquinate synthase (359 aa).

It belongs to the archaeal-type DHQ synthase family.

It carries out the reaction 2-amino-2,3,7-trideoxy-D-lyxo-hept-6-ulosonate + NAD(+) + H2O = 3-dehydroquinate + NH4(+) + NADH + H(+). In terms of biological role, catalyzes the oxidative deamination and cyclization of 2-amino-3,7-dideoxy-D-threo-hept-6-ulosonic acid (ADH) to yield 3-dehydroquinate (DHQ), which is fed into the canonical shikimic pathway of aromatic amino acid biosynthesis. In Methanosphaera stadtmanae (strain ATCC 43021 / DSM 3091 / JCM 11832 / MCB-3), this protein is 3-dehydroquinate synthase.